Reading from the N-terminus, the 229-residue chain is Casparian strip membrane protein 1 (229 aa).

The Cytoplasmic segment spans residues 1–67 (MSTSEAGAAA…FRRADRGSRC (67 aa)). A helical membrane pass occupies residues 68–88 (VALLDFVLRVAAFGPALAAAI). Residues 89 to 115 (ATGTSDETLSVFTQFFQFHARFDDFPA) lie on the Extracellular side of the membrane. The helical transmembrane segment at 116–136 (LLFFMVANAIAAGYLVLSLPF) threads the bilayer. Over 137–157 (SAVIVLRPQAIGLRHLLLVCD) the chain is Cytoplasmic. The chain crosses the membrane as a helical span at residues 158–178 (MIIAALLTAAAAAAAAIVDLA). Topologically, residues 179–205 (HSGNLRANWVPICMQFHGFCQRTSGAV) are extracellular. A helical membrane pass occupies residues 206–226 (VGSFLAVLVLLFLVILAAFAI). Over 227 to 229 (RKR) the chain is Cytoplasmic.

It belongs to the Casparian strip membrane proteins (CASP) family. In terms of assembly, homodimer and heterodimers.

It is found in the cell membrane. Regulates membrane-cell wall junctions and localized cell wall deposition. Required for establishment of the Casparian strip membrane domain (CSD) and the subsequent formation of Casparian strips, a cell wall modification of the root endodermis that determines an apoplastic barrier between the intraorganismal apoplasm and the extraorganismal apoplasm and prevents lateral diffusion. This is Casparian strip membrane protein 1 from Sorghum bicolor (Sorghum).